A 330-amino-acid chain; its full sequence is Ketol-acid reductoisomerase (NADP(+)) (330 aa).

The region spanning 3-184 is the KARI N-terminal Rossmann domain; it reads LPVYYDKDID…GGGRMGVLKT (182 aa). NADP(+) contacts are provided by residues 26 to 29, Ser-52, and Ser-54; that span reads YGAQ. Residue His-109 is part of the active site. Gly-135 is a binding site for NADP(+). The KARI C-terminal knotted domain occupies 185–329; it reads SFKEECESDL…EILRAPFNHK (145 aa). The Mg(2+) site is built by Asp-193, Glu-197, Glu-229, and Glu-233. Ser-254 is a substrate binding site.

This sequence belongs to the ketol-acid reductoisomerase family. It depends on Mg(2+) as a cofactor.

The catalysed reaction is (2R)-2,3-dihydroxy-3-methylbutanoate + NADP(+) = (2S)-2-acetolactate + NADPH + H(+). It carries out the reaction (2R,3R)-2,3-dihydroxy-3-methylpentanoate + NADP(+) = (S)-2-ethyl-2-hydroxy-3-oxobutanoate + NADPH + H(+). It functions in the pathway amino-acid biosynthesis; L-isoleucine biosynthesis; L-isoleucine from 2-oxobutanoate: step 2/4. Its pathway is amino-acid biosynthesis; L-valine biosynthesis; L-valine from pyruvate: step 2/4. Involved in the biosynthesis of branched-chain amino acids (BCAA). Catalyzes an alkyl-migration followed by a ketol-acid reduction of (S)-2-acetolactate (S2AL) to yield (R)-2,3-dihydroxy-isovalerate. In the isomerase reaction, S2AL is rearranged via a Mg-dependent methyl migration to produce 3-hydroxy-3-methyl-2-ketobutyrate (HMKB). In the reductase reaction, this 2-ketoacid undergoes a metal-dependent reduction by NADPH to yield (R)-2,3-dihydroxy-isovalerate. The polypeptide is Ketol-acid reductoisomerase (NADP(+)) (Helicobacter pylori (strain HPAG1)).